A 471-amino-acid polypeptide reads, in one-letter code: MNNENELLRQDILSYLEQHEKKDMLRFLTCGSVDDGKSTLIGRLLHDSKMIYEDQLAAITKDSKKVGTTGEKVDLALLVDGLQSEREQGITIDVAYRYFSTDKRKFIIADTPGHEQYTRNMVTGASTCDLAIILVDARGGVKVQTKRHSFLVSLLGIKHVIVAINKMDLMDYSEEVYKQIQEDYLKFAEQLDIPDIQFVPISALEGDNVVGKSEKTPWFDGTPLMEMLENIEIGEDDNLEDFRFPVQYVNRPNLDFRGFAGTVVSGQVAPGDEVTALPSGKKSKVKQVVTFEGDQERAYVPQAVTLTLEDEIDISRGDMIVKSDNLPLLNTQFKTHLVWMSEEPLMPNKQYLFKFATKSTPGVVAHIDNQIDVNTLEEADAMHLNLNEIGVVDVKFTQPVACDPYKRNRPTGSFIVIDRLTNGTVGAGMIIDEIAGDAQHTSPNFSEFELEFNALVRKHFPHWNSVDISKL.

In terms of domain architecture, tr-type G spans lysine 22–leucine 239. A G1 region spans residues glycine 31–serine 38. A GTP-binding site is contributed by glycine 31–serine 38. The segment at glycine 89–aspartate 93 is G2. Residues aspartate 110–glycine 113 form a G3 region. GTP contacts are provided by residues aspartate 110–histidine 114 and asparagine 165–aspartate 168. Residues asparagine 165–aspartate 168 are G4. The segment at serine 202–leucine 204 is G5.

This sequence belongs to the TRAFAC class translation factor GTPase superfamily. Classic translation factor GTPase family. CysN/NodQ subfamily. As to quaternary structure, heterodimer composed of CysD, the smaller subunit, and CysN.

The catalysed reaction is sulfate + ATP + H(+) = adenosine 5'-phosphosulfate + diphosphate. Its pathway is sulfur metabolism; hydrogen sulfide biosynthesis; sulfite from sulfate: step 1/3. In terms of biological role, with CysD forms the ATP sulfurylase (ATPS) that catalyzes the adenylation of sulfate producing adenosine 5'-phosphosulfate (APS) and diphosphate, the first enzymatic step in sulfur assimilation pathway. APS synthesis involves the formation of a high-energy phosphoric-sulfuric acid anhydride bond driven by GTP hydrolysis by CysN coupled to ATP hydrolysis by CysD. This Alteromonas mediterranea (strain DSM 17117 / CIP 110805 / LMG 28347 / Deep ecotype) protein is Sulfate adenylyltransferase subunit 1.